We begin with the raw amino-acid sequence, 619 residues long: Bifunctional glutathionylspermidine synthetase/amidase (619 aa).

Residues 2-195 form a gsp amidase region; it reads SKGTTSQDAP…LGWMIQTEDT (194 aa). One can recognise a Peptidase C51 domain in the interval 34-176; the sequence is DPQEYEDDAV…MVVENGCYTL (143 aa). Gln-58 serves as a coordination point for glutathionylspermidine. The active-site S-(gamma-glutamyl-cysteinyl-glycyl)-cysteine intermediate is the Cys-59. Cys-59 bears the Cysteine sulfenic acid (-SOH); transient mark. Glutathionylspermidine-binding positions include Arg-64, 78–81, and Asn-149; that span reads VGMA. The tract at residues 196 to 205 is linker; it reads EYSLPQPEIA. The interval 206–619 is gsp synthetase; sequence GELLKISGAR…DIEPLIVVKK (414 aa). A glutathione-binding site is contributed by Arg-316. Position 316–318 (316–318) interacts with ATP; sequence RMD. Mg(2+) is bound by residues Asp-318, Glu-330, and Asn-332. Residue Ser-335 participates in glutathione binding. Spermidine is bound at residue Glu-391. Positions 392 and 446 each coordinate glutathione. Residues Lys-498, Lys-533, 539 to 540, 568 to 571, Gln-582, and 603 to 605 each bind ATP; these read CG, QQLW, and LVI. Residue Asp-610 coordinates spermidine.

This sequence in the C-terminal section; belongs to the glutathionylspermidine synthase preATP-grasp family. Homodimer. In terms of processing, oxidation of Cys-59 to sulfenic acid during oxidative stress selectively inhibits the amidase activity which leads to a rapid increase in the amounts of intracellular Gsp and Gsp S-thiolated proteins (GspSSPs).

The enzyme catalyses spermidine + glutathione + ATP = glutathionylspermidine + ADP + phosphate + H(+). It catalyses the reaction glutathionylspermidine + H2O = spermidine + glutathione. The protein operates within sulfur metabolism; glutathione metabolism. It participates in amine and polyamine metabolism; spermidine metabolism. With respect to regulation, when exposed to oxidative stress, Gsp amidase activity is transiently inhibited in vivo by oxidation of the catalytic Cys-59 thiol to sulfenic acid; this modification does not affect Gsp synthetase activity. Gsp amidase activity is negatively autoregulated by the Gsp synthetase domain, and is activated by the Gsp synthetase substrates, GSH and ATP-Mg(2+); the occupancy of the synthetase active site may initiate communication through the protein as manifest by the release of inhibition of the amidase activity. A tetrahedral phosphonate analog of glutathionylspermidine, designed as a mimic of the proposed tetrahedral intermediate for either reaction, inhibits the synthetase activity (Ki of 10 uM) but does not inhibit the amidase activity. Amidase activity is inhibited by iodoacetamide in vitro. Its function is as follows. Catalyzes the formation of an amide bond between glutathione (GSH) and spermidine coupled with hydrolysis of ATP; also catalyzes the opposing reaction, i.e. the hydrolysis of glutathionylspermidine (Gsp) back to glutathione and spermidine. The amidase active site can also hydrolyze Gsp-disulfide (Gsp-S-S-Gsp) to Gsp-SG and Gsp S-thiolated proteins (GspSSPs) to GSH S-thiolated protein (GSSPs). Likely acts synergistically with glutaredoxin to regulate the redox environment of E.coli and defend against oxidative damage. In vitro, the amidase active site also catalyzes hydrolysis of amide and ester derivatives of glutathione (e.g. glutathione ethyl ester and glutathione amide) but lacks activity toward acetylspermidine (N1 and N8) and acetylspermine (N1). The polypeptide is Bifunctional glutathionylspermidine synthetase/amidase (gss) (Escherichia coli (strain K12)).